A 126-amino-acid chain; its full sequence is Non-specific lipid-transfer protein 15 (126 aa).

A signal peptide spans 1–22; that stretch reads MSKSIFVVCITLLVVLSPTLNA. Cystine bridges form between Cys34-Cys80, Cys45-Cys57, Cys58-Cys100, and Cys78-Cys114.

It belongs to the plant LTP family.

Its function is as follows. Plant non-specific lipid-transfer proteins transfer phospholipids as well as galactolipids across membranes. May play a role in wax or cutin deposition in the cell walls of expanding epidermal cells and certain secretory tissues. This Arabidopsis thaliana (Mouse-ear cress) protein is Non-specific lipid-transfer protein 15 (LTP15).